We begin with the raw amino-acid sequence, 422 residues long: Glutamate-1-semialdehyde 2,1-aminomutase (422 aa).

At lysine 264 the chain carries N6-(pyridoxal phosphate)lysine.

This sequence belongs to the class-III pyridoxal-phosphate-dependent aminotransferase family. HemL subfamily. As to quaternary structure, homodimer. Requires pyridoxal 5'-phosphate as cofactor.

Its subcellular location is the cytoplasm. It catalyses the reaction (S)-4-amino-5-oxopentanoate = 5-aminolevulinate. The protein operates within porphyrin-containing compound metabolism; protoporphyrin-IX biosynthesis; 5-aminolevulinate from L-glutamyl-tRNA(Glu): step 2/2. The sequence is that of Glutamate-1-semialdehyde 2,1-aminomutase from Clostridium acetobutylicum (strain ATCC 824 / DSM 792 / JCM 1419 / IAM 19013 / LMG 5710 / NBRC 13948 / NRRL B-527 / VKM B-1787 / 2291 / W).